The sequence spans 263 residues: Oxidoreductase UcpA (263 aa).

10–32 (LITGALQGIGEGIARTFARHGAN) lines the NAD(+) pocket. Serine 141 is a binding site for substrate. The active-site Proton acceptor is tyrosine 155.

It belongs to the short-chain dehydrogenases/reductases (SDR) family.

The protein is Oxidoreductase UcpA (ucpA) of Escherichia coli O157:H7.